The primary structure comprises 1084 residues: Myosin heavy chain, skeletal muscle (1084 aa).

Disordered stretches follow at residues 1–20, 270–292, and 298–317; these read SAETEKEMANMKEEFEKTKE, EIEAERASRAKAEKQRSDLSREL, and RLEEAGGATSAQIEMNKKRE. An alpha-helical tailpiece (S2) region spans residues 1–258; that stretch reads SAETEKEMAN…SKIEDEQALM (258 aa). Residues 259-1084 are rodlike tail (S2 and LMM domains); the sequence is TNLQRIEELE…DVHSKVISEE (826 aa). The segment covering 273–292 has biased composition (basic and acidic residues); that stretch reads AERASRAKAEKQRSDLSREL. Residues 455–1084 adopt a coiled-coil conformation; sequence QAFTQQIEGL…DVHSKVISEE (630 aa).

As to quaternary structure, muscle myosin is a hexameric protein that consists of 2 heavy chain subunits (MHC), 2 alkali light chain subunits (MLC) and 2 regulatory light chain subunits (MLC-2).

It is found in the cytoplasm. The protein resides in the myofibril. Muscle contraction. This Oryctolagus cuniculus (Rabbit) protein is Myosin heavy chain, skeletal muscle.